The chain runs to 25 residues: Caerin-2.5 (25 aa).

In terms of tissue distribution, expressed by the skin parotoid and/or rostral glands.

It is found in the secreted. Functionally, antibacterial peptide, that adopts an alpha helical conformation which can disrupt bacterial membranes. Each caerin displays a different antimicrobial specificity. The chain is Caerin-2.5 from Ranoidea gilleni (Centralian tree frog).